We begin with the raw amino-acid sequence, 638 residues long: 1-deoxy-D-xylulose-5-phosphate synthase (638 aa).

Residues H81 and G122 to S124 each bind thiamine diphosphate. D153 provides a ligand contact to Mg(2+). Thiamine diphosphate-binding positions include G154–S155, N182, Y293, and E377. N182 is a Mg(2+) binding site.

It belongs to the transketolase family. DXPS subfamily. Homodimer. It depends on Mg(2+) as a cofactor. Thiamine diphosphate serves as cofactor.

It carries out the reaction D-glyceraldehyde 3-phosphate + pyruvate + H(+) = 1-deoxy-D-xylulose 5-phosphate + CO2. Its pathway is metabolic intermediate biosynthesis; 1-deoxy-D-xylulose 5-phosphate biosynthesis; 1-deoxy-D-xylulose 5-phosphate from D-glyceraldehyde 3-phosphate and pyruvate: step 1/1. Its function is as follows. Catalyzes the acyloin condensation reaction between C atoms 2 and 3 of pyruvate and glyceraldehyde 3-phosphate to yield 1-deoxy-D-xylulose-5-phosphate (DXP). The chain is 1-deoxy-D-xylulose-5-phosphate synthase from Oleidesulfovibrio alaskensis (strain ATCC BAA-1058 / DSM 17464 / G20) (Desulfovibrio alaskensis).